Reading from the N-terminus, the 83-residue chain is MKTLLLTLVVVTIVCLDLGYTLKCHNTQLPFIYKTCPEGKNLCFKATLKKFPLKFPVKRGCADNCPKNSALLKYVCCSTEKCN.

The signal sequence occupies residues 1–21 (MKTLLLTLVVVTIVCLDLGYT). Cystine bridges form between C24/C43, C36/C61, C65/C76, and C77/C82.

The protein belongs to the three-finger toxin family. Short-chain subfamily. Orphan group XV sub-subfamily. Expressed by the venom gland.

Its subcellular location is the secreted. The protein resides in the target cell membrane. In terms of biological role, has low cytotoxic activity. This Naja atra (Chinese cobra) protein is Cardiotoxin 7a.